A 169-amino-acid polypeptide reads, in one-letter code: Anaerobic nitrite reductase NSHB2 (169 aa).

The 151-residue stretch at 16–166 (SFSEEQEALV…LVAAIKQEMK (151 aa)) folds into the Globin domain. Residues 49–53 (EVAPS) carry the Homodimerization motif. Positions 59, 73, 77, 107, 111, and 112 each coordinate heme b. Residues 119–131 (DAHFEVTRFALLE) carry the Homodimerization motif.

This sequence belongs to the plant globin family. Homodimer. Heme b is required as a cofactor. Expressed in leaves, but not in roots. Present in embryonic organs including embryos, coleoptiles and seminal roots.

Its subcellular location is the cytoplasm. The protein resides in the nucleus. It catalyses the reaction Fe(III)-heme b-[protein] + nitric oxide + H2O = Fe(II)-heme b-[protein] + nitrite + 2 H(+). In terms of biological role, phytoglobin that reduces nitrite to nitric oxide under anoxic conditions (e.g. during flooding or in waterlogged soil). May not function as an oxygen storage or transport protein. Has an unusually high affinity for O(2) through an hexacoordinate heme iron because of a very low dissociation constant. Promotes tolerance to low potassium K(+) conditions. The chain is Anaerobic nitrite reductase NSHB2 from Oryza sativa subsp. japonica (Rice).